The following is a 328-amino-acid chain: Malate dehydrogenase (328 aa).

11–17 (GAAGQIG) contacts NAD(+). Residues Arg94 and Arg100 each coordinate substrate. NAD(+) contacts are provided by residues Asn107, Gln114, and 131 to 133 (VGN). Substrate is bound by residues Asn133 and Arg164. His189 functions as the Proton acceptor in the catalytic mechanism.

The protein belongs to the LDH/MDH superfamily. MDH type 2 family.

It carries out the reaction (S)-malate + NAD(+) = oxaloacetate + NADH + H(+). Its function is as follows. Catalyzes the reversible oxidation of malate to oxaloacetate. In Xylella fastidiosa (strain M23), this protein is Malate dehydrogenase.